The following is a 375-amino-acid chain: DNA replication and repair protein RecF (375 aa).

Residue 30-37 (GENAQGKT) coordinates ATP.

It belongs to the RecF family.

The protein localises to the cytoplasm. The RecF protein is involved in DNA metabolism; it is required for DNA replication and normal SOS inducibility. RecF binds preferentially to single-stranded, linear DNA. It also seems to bind ATP. This Bacillus cereus (strain G9842) protein is DNA replication and repair protein RecF.